Here is a 282-residue protein sequence, read N- to C-terminus: Complement component 1 Q subcomponent-binding protein, mitochondrial (282 aa).

The N-terminal 73 residues, 1 to 73 (MLPLLRCVPR…PCACGCGCGS (73 aa)), are a transit peptide targeting the mitochondrion. Positions 76–93 (TDGDKAFVDFLSDEIKEE) are C1q binding. Ser-87 is subject to Phosphoserine. The residue at position 91 (Lys-91) is an N6-acetyllysine. Residues 138–164 (SIPPTFDGEEEPSQGQKVEEQEPELTS) are disordered. The interval 168-213 (FVVEVIKNDDGKKALVLDCHYPEDEVGQEDEAESDIFSIREVSFQS) is interaction with MAVS. A Phosphotyrosine modification is found at Tyr-188. Phosphoserine is present on residues Ser-201 and Ser-205. Phosphothreonine is present on Thr-214.

The protein belongs to the MAM33 family. Homotrimer; three monomers form a donut-shaped structure with an unusually asymmetric charge distribution on the surface. Interacts with CDK13, HRK, VTN, NFYB, ADRA1B, FOXC1, DDX21, DDX50, NCL, SRSF1, SRSF9 and CDKN2A isoform smARF. Interacts with CD93; the association may represent a cell surface C1q receptor. Interacts with KRT1; the association represents a cell surface kininogen receptor. Interacts with CD209; the interaction is indicative for a C1q:C1QBP:CD209 signaling complex. Interacts with FBL and RRP1; the respective interactions with C1QBP are competitive. Probably associates with the mitoribosome. Interacts with MAVS; the interaction occurs upon viral transfection. Interacts with PPIF. Interacts with U2AF1L4. Interacts with PLEKHN1. Interacts with VGF-derived peptide TLQP-21. Interacts with POLGARF which is produced from an alternative reading frame of the POLG gene; the interaction results in nucleolar localization of C1QBP, probably due to prevention of C1QBP maturation and redirection from mitochondria to nucleoli. Interacts with MRE11 and RAD50; forming the MRC (MRE11-RAD50-C1QBP) complex that inhibits the activity of MRE11. As to quaternary structure, (Microbial infection) Interacts with Rubella virus capsid protein; the interaction occurs in mitochondria. Interacts with Rubella virus protease/methyltransferase p150. In terms of assembly, (Microbial infection) Interacts with Staphylococcus aureus protein A/spa. (Microbial infection) Interacts with Staphylococcus aureus protein A/spa, HIV-1 Tat and HCV core protein. As to quaternary structure, (Microbial infection) Interacts with HIV-1 Tat and HCV core protein. In terms of assembly, (Microbial infection) Interacts with L.monocytogenes internalin B. (Microbial infection) Interacts with Epstein-Barr virus EBNA1. Expressed on cell surface of peripheral blood cells (at protein level); Surface expression is reported for macrophages and monocyte-derived dendritic cells.

Its subcellular location is the mitochondrion matrix. The protein resides in the nucleus. The protein localises to the nucleolus. It is found in the cell membrane. It localises to the secreted. Its subcellular location is the cytoplasm. Multifunctional and multicompartmental protein involved in inflammation and infection processes, ribosome biogenesis, protein synthesis in mitochondria, regulation of apoptosis, transcriptional regulation and pre-mRNA splicing. At the cell surface is thought to act as an endothelial receptor for plasma proteins of the complement and kallikrein-kinin cascades. Putative receptor for C1q; specifically binds to the globular 'heads' of C1q thus inhibiting C1; may perform the receptor function through a complex with C1qR/CD93. In complex with cytokeratin-1/KRT1 is a high affinity receptor for kininogen-1/HMWK. Can also bind other plasma proteins, such as coagulation factor XII leading to its autoactivation. May function to bind initially fluid kininogen-1 to the cell membrane. The secreted form may enhance both extrinsic and intrinsic coagulation pathways. It is postulated that the cell surface form requires docking with transmembrane proteins for downstream signaling which might be specific for a cell-type or response. By acting as C1q receptor is involved in chemotaxis of immature dendritic cells and neutrophils and is proposed to signal through CD209/DC-SIGN on immature dendritic cells, through integrin alpha-4/beta-1 during trophoblast invasion of the decidua, and through integrin beta-1 during endothelial cell adhesion and spreading. Signaling involved in inhibition of innate immune response is implicating the PI3K-AKT/PKB pathway. Required for protein synthesis in mitochondria. In mitochondrial translation may be involved in formation of functional 55S mitoribosomes; the function seems to involve its RNA-binding activity. Acts as a RNA modification reader, which specifically recognizes and binds mitochondrial RNAs modified by C5-methylcytosine (m5C) in response to stress, and promotes recruitment of the mitochondrial degradosome complex, leading to their degradation. May be involved in the nucleolar ribosome maturation process; the function may involve the exchange of FBL for RRP1 in the association with pre-ribosome particles. Involved in regulation of RNA splicing by inhibiting the RNA-binding capacity of SRSF1 and its phosphorylation. Is required for the nuclear translocation of splicing factor U2AF1L4. Involved in regulation of CDKN2A- and HRK-mediated apoptosis. Stabilizes mitochondrial CDKN2A isoform smARF. May be involved in regulation of FOXC1 transcriptional activity and NFY/CCAAT-binding factor complex-mediated transcription. May play a role in antibacterial defense as it can bind to cell surface hyaluronan and inhibit Streptococcus pneumoniae hyaluronate lyase. May be involved in modulation of the immune response; ligation by HCV core protein is resulting in suppression of interleukin-12 production in monocyte-derived dendritic cells. Involved in regulation of antiviral response by inhibiting RIGI- and IFIH1-mediated signaling pathways probably involving its association with MAVS after viral infection. Acts as a regulator of DNA repair via homologous recombination by inhibiting the activity of MRE11: interacts with unphosphorylated MRE11 and RAD50 in absence of DNA damage, preventing formation and activity of the MRN complex. Following DNA damage, dissociates from phosphorylated MRE11, allowing formation of the MRN complex. In terms of biological role, (Microbial infection) Involved in HIV-1 replication, presumably by contributing to splicing of viral RNA. Functionally, (Microbial infection) In infection processes acts as an attachment site for microbial proteins, including Listeria monocytogenes internalin B (InlB) and Staphylococcus aureus protein A. Its function is as follows. (Microbial infection) Involved in replication of Rubella virus. This is Complement component 1 Q subcomponent-binding protein, mitochondrial (C1QBP) from Homo sapiens (Human).